The following is a 64-amino-acid chain: Probable cytochrome c oxidase subunit 5C-1 (64 aa).

The helical transmembrane segment at 15–34 threads the bilayer; it reads SVVKELFIGLALGLAAGGLW.

It belongs to the cytochrome c oxidase subunit 5C family.

The protein resides in the mitochondrion inner membrane. Functionally, this protein is one of the nuclear-coded polypeptide chains of cytochrome c oxidase, the terminal oxidase in mitochondrial electron transport. The chain is Probable cytochrome c oxidase subunit 5C-1 from Arabidopsis thaliana (Mouse-ear cress).